The primary structure comprises 475 residues: MKNFQDKIKKLVPEMRRVNQIHFIGIGGAGMSGIAEVLLNEGYQISGSDIAEGPVTKRLAEAGAKVFIGHQAENVAGASVVVASSAIDDSNPEVRAAKEARIPVIQRAQMLAEIMRFRHGIAVAGTHGKTTTTAMISMIYTEAKLDPTFVNGGLVKSAGKNAHLGASRYLIAEADESDASFLHLQPMVSVVTNIEPDHMDTYGGDFEQMKATYVKFLRNLPFYGLAVMCADDETVMEIAPQVGRQVLTYGFSEKADYRIEDYQQTGFQGHYTVVCPNGERIDVLLNVPGKHNALNATAALAVAKEEGIANEAILAALADFQGAGRRFDQLGSFIRPNGKVMLVDDYGHHPTEVDVTIKAARSGWENKRVVMIFQPHRYSRTRDLFDDFVQVLSQVDALIMLEVYAAGEAPIVGADSKALCRSIRNLGKVDPILVSDTDQLGEVLDQIIQDGDLILAQGAGSVSRISRGLAESWKA.

G125 to T131 is an ATP binding site.

This sequence belongs to the MurCDEF family.

The protein resides in the cytoplasm. The catalysed reaction is UDP-N-acetyl-alpha-D-muramate + L-alanine + ATP = UDP-N-acetyl-alpha-D-muramoyl-L-alanine + ADP + phosphate + H(+). The protein operates within cell wall biogenesis; peptidoglycan biosynthesis. Its function is as follows. Cell wall formation. In Actinobacillus pleuropneumoniae serotype 7 (strain AP76), this protein is UDP-N-acetylmuramate--L-alanine ligase.